A 353-amino-acid chain; its full sequence is Stachydrine N-demethylase reductase subunit Stc4 (353 aa).

The FAD-binding FR-type domain maps to 11–114 (SDAEPLECVT…IGPAGKFSIV (104 aa)). One can recognise a 2Fe-2S ferredoxin-type domain in the interval 269–353 (AEIAFALSGV…KPLRRVSVEA (85 aa)). [2Fe-2S] cluster contacts are provided by Cys303, Cys308, Cys311, and Cys341.

This sequence in the N-terminal section; belongs to the FAD-binding oxidoreductase type 6 family. In terms of assembly, the system is probably composed of an oxygenase subunit (Stc2) and two reductase subunits (Stc3 and Stc4). Requires FAD as cofactor. [2Fe-2S] cluster is required as a cofactor.

In terms of biological role, reductase involved in the catabolism of stachydrine (L-proline betaine), a source of carbon and nitrogen. Part of a Rieske-type oxygenase system that catalyzes the demethylation of stachydrine to produce N-methyl-L-proline (monomethylproline). This subunit is probably involved in the transfer of electrons from NAD(P)H to the catalytic subunit Stc2. This chain is Stachydrine N-demethylase reductase subunit Stc4, found in Rhizobium meliloti (strain 1021) (Ensifer meliloti).